Consider the following 298-residue polypeptide: U1 small nuclear ribonucleoprotein A (298 aa).

2 RRM domains span residues 2-113 and 227-298; these read SALY…KART and KVLL…GFAK.

Belongs to the RRM U1 A/B'' family. Component of the spliceosome where it is associated with snRNP U1.

The protein localises to the nucleus. Its function is as follows. Involved in nuclear mRNA splicing. The principal role of the U1A is to help fold or maintain U1 RNA in an active configuration. It is the first snRNP to interact with pre-mRNA. This interaction is required for the subsequent binding of U2 snRNP and the U4/U6/U5 tri-snRNP. The polypeptide is U1 small nuclear ribonucleoprotein A (MUD1) (Saccharomyces cerevisiae (strain ATCC 204508 / S288c) (Baker's yeast)).